Consider the following 643-residue polypeptide: Transcription elongation factor B polypeptide 3 (643 aa).

One can recognise a TFIIS N-terminal domain in the interval 9–82; it reads DVVRHYQRSI…TKWKAMVAKE (74 aa). Disordered stretches follow at residues 86–289 and 302–351; these read IAST…MGAN and SSKK…SKKP. Residues 94–106 show a composition bias toward basic and acidic residues; sequence HNEEDSGKTKSSD. The segment covering 114-124 has biased composition (polar residues); it reads KGGNSSSGEDL. A Phosphoserine modification is found at Ser-120. A compositionally biased stretch (basic residues) spans 127–136; that stretch reads SKHKSKHAKS. Basic and acidic residues-rich tracts occupy residues 164–198 and 207–237; these read HDKS…KDSS and SKSE…VKDK. Basic residues predominate over residues 238 to 255; that stretch reads SSKHKSSSSKSSKRSHSP. Over residues 302–336 the composition is skewed to low complexity; it reads SSKKSSSNSKSKFVAKPTAAPSSSALSAPTTAGSS. Residues 413–571 are activation domain; it reads AQGISSKTMR…PPRSVQRKQE (159 aa). The interacting with Elongin BC complex stretch occupies residues 439 to 448; that stretch reads SLFDLCTRVL.

It is found in the nucleus. In terms of biological role, SIII, also known as elongin, is a general transcription elongation factor that increases the RNA polymerase II transcription elongation past template-encoded arresting sites. Subunit A is transcriptionally active and its transcription activity is strongly enhanced by binding to the dimeric complex of the SIII regulatory subunits B and C (elongin BC complex). May play an important role in metamorphosis. In Drosophila melanogaster (Fruit fly), this protein is Transcription elongation factor B polypeptide 3 (EloA).